The following is a 266-amino-acid chain: Glutamate racemase (266 aa).

Residues 9–10 and 41–42 contribute to the substrate site; these read DS and YG. The active-site Proton donor/acceptor is Cys-72. 73–74 lines the substrate pocket; the sequence is NT. Catalysis depends on Cys-184, which acts as the Proton donor/acceptor. 185 to 186 contributes to the substrate binding site; it reads TH.

This sequence belongs to the aspartate/glutamate racemases family.

It catalyses the reaction L-glutamate = D-glutamate. It participates in cell wall biogenesis; peptidoglycan biosynthesis. In terms of biological role, provides the (R)-glutamate required for cell wall biosynthesis. The polypeptide is Glutamate racemase (Staphylococcus aureus (strain bovine RF122 / ET3-1)).